A 425-amino-acid polypeptide reads, in one-letter code: CinA-like protein (425 aa).

Belongs to the CinA family.

The sequence is that of CinA-like protein from Shewanella sp. (strain MR-4).